The sequence spans 1541 residues: WD repeat-containing protein 62 (1541 aa).

A2 is subject to N-acetylalanine. S33 is modified (phosphoserine). Residue T46 is modified to Phosphothreonine. WD repeat units lie at residues 109 to 150, 153 to 194, 196 to 234, 291 to 330, 357 to 396, 402 to 450, 490 to 529, 532 to 574, 578 to 618, 626 to 665, 671 to 713, and 714 to 752; these read TARK…QVAE, GHKY…VVAS, KVSC…EAKV, INLK…YLAN, AVYP…KVGK, FHSS…DSHW, DMKA…ELVR, AHDA…SLEQ, DHSS…DGLH, AEKT…QKKC, GDEG…KMFG, and HSEI…TNCM. Residue S501 is modified to Phosphoserine. Disordered regions lie at residues 762–820 and 911–1050; these read REQP…KESL and LSQS…LPQT. Over residues 770–780 the composition is skewed to basic and acidic residues; that stretch reads KDGKWSRDPRQ. A compositionally biased stretch (polar residues) spans 781 to 795; it reads ETCTSMPSEISLSPG. The span at 797–809 shows a compositional bias: acidic residues; that stretch reads QTEDELEEECEPE. Residues 803–846 form a WD 13 repeat; sequence EEECEPEELLKTPSKESLDSDPRCLLTNGKLPLWAKRLLGDDDV. A compositionally biased stretch (basic and acidic residues) spans 810–820; that stretch reads ELLKTPSKESL. Positions 937 to 948 are enriched in low complexity; it reads VSELLCSLESEV. Position 943 is a phosphoserine (S943). The span at 1008–1026 shows a compositional bias: pro residues; it reads PPRPDPDPPFDVAVPPAPG. Position 1050 is a phosphothreonine (T1050). Phosphoserine occurs at positions 1095, 1125, and 1151. Disordered stretches follow at residues 1133 to 1153 and 1185 to 1212; these read LAGS…TSPG and SSSS…QGVH. A WD 14 repeat occupies 1138 to 1180; that stretch reads PRAEPLRAGTGYTSPGRTNVLSAGKAEEPLEAWSPLTSCLTGL. Pro residues predominate over residues 1193–1202; that stretch reads DKTPPTPTAL. A phosphoserine mark is found at S1235, S1255, and S1256. The interval 1273–1293 is disordered; it reads TVTPSSDSEGQEPALPSRGNH. T1275 carries the phosphothreonine modification.

As to quaternary structure, can form homodimers (via C-terminus). Interacts (via C-terminus) with MAPKBP1 (via C-terminus). Interacts with CDK5RAP2, CEP152, CEP63 and KIAA0753. CEP63, CDK5RAP2, CEP152, WDR62 are proposed to form a stepwise assembled complex at the centrosome forming a ring near parental centrioles.

The protein resides in the nucleus. It localises to the cytoplasm. It is found in the cytoskeleton. Its subcellular location is the spindle pole. The protein localises to the microtubule organizing center. The protein resides in the centrosome. It localises to the centriole. Its function is as follows. Required for cerebral cortical development. Plays a role in neuronal proliferation and migration. Plays a role in mother-centriole-dependent centriole duplication; the function seems also to involve CEP152, CDK5RAP2 and CEP63 through a stepwise assembled complex at the centrosome that recruits CDK2 required for centriole duplication. In Sus scrofa (Pig), this protein is WD repeat-containing protein 62 (WDR62).